Here is a 440-residue protein sequence, read N- to C-terminus: Probable exopolygalacturonase C (440 aa).

Residues 1–19 form the signal peptide; it reads MSVFKASFLFLLSSSLVHG. 2 N-linked (GlcNAc...) asparagine glycosylation sites follow: N82 and N99. PbH1 repeat units follow at residues 215 to 236, 238 to 259, and 265 to 288; these read GTNIQITDSIMYNGDDAIAVGA, SHDTLFTRNTIGYQTHGMSIGS, and TDFANISNIRFDDVTVVDGLYAAR. Catalysis depends on D229, which acts as the Proton donor. H253 is an active-site residue. N-linked (GlcNAc...) asparagine glycosylation is found at N269, N301, N311, and N334. A disulfide bond links C387 and C393. N417 and N432 each carry an N-linked (GlcNAc...) asparagine glycan.

This sequence belongs to the glycosyl hydrolase 28 family.

It localises to the secreted. It carries out the reaction [(1-&gt;4)-alpha-D-galacturonosyl](n) + H2O = alpha-D-galacturonate + [(1-&gt;4)-alpha-D-galacturonosyl](n-1). Specific in hydrolyzing the terminal glycosidic bond of polygalacturonic acid and oligogalacturonates. This Aspergillus niger (strain ATCC MYA-4892 / CBS 513.88 / FGSC A1513) protein is Probable exopolygalacturonase C (pgxC).